Consider the following 188-residue polypeptide: HTH-type transcriptional regulator Mb3439c (188 aa).

Residues 17-77 (EEVAAAILQA…AVLDHLGTKL (61 aa)) form the HTH tetR-type domain. The H-T-H motif DNA-binding region spans 40 to 59 (SIRDIAARSKVNHGLVFRHF).

Its function is as follows. Negatively regulates the expression of sulfate ester dioxygenase Mb3440 and its own expression. This Mycobacterium bovis (strain ATCC BAA-935 / AF2122/97) protein is HTH-type transcriptional regulator Mb3439c.